The sequence spans 657 residues: DNA ligase (657 aa).

An NAD(+)-binding site is contributed by 80-81 (SL). Catalysis depends on Lys-104, which acts as the N6-AMP-lysine intermediate. Positions 125, 159, and 297 each coordinate NAD(+). Residues Cys-386, Cys-389, Cys-406, and Cys-411 each contribute to the Zn(2+) site. One can recognise a BRCT domain in the interval 571–657 (QSEQIFENLN…EWLNNGVRPE (87 aa)).

This sequence belongs to the NAD-dependent DNA ligase family. LigA subfamily. Requires Mg(2+) as cofactor. The cofactor is Mn(2+).

The enzyme catalyses NAD(+) + (deoxyribonucleotide)n-3'-hydroxyl + 5'-phospho-(deoxyribonucleotide)m = (deoxyribonucleotide)n+m + AMP + beta-nicotinamide D-nucleotide.. DNA ligase that catalyzes the formation of phosphodiester linkages between 5'-phosphoryl and 3'-hydroxyl groups in double-stranded DNA using NAD as a coenzyme and as the energy source for the reaction. It is essential for DNA replication and repair of damaged DNA. The protein is DNA ligase of Ruminiclostridium cellulolyticum (strain ATCC 35319 / DSM 5812 / JCM 6584 / H10) (Clostridium cellulolyticum).